Consider the following 411-residue polypeptide: MSINLNRVQNLIEKLAFISSVPNELTRLAFTEEDEKAHNMIIELCKEYDLSIRRDSIGNLFIRKAGKEDFLPAVAFGSHIDTVVNAGKFDGPLGSVAGLEILLQLCEQNIQTRYPLELIIFTCEESSRFNFATLGSKVMCGIVNQEKLSSLRDKQGKGLSEAMAEVGMNFNLVNQAKRDAKEFKCFFELHIEQGPRLENEGKTIGVVTGIAAPIRAIVKIKGQADHSGATAMHYRHDALLGGSELSLAIERAAIQAGHSTVATVGNITAKPGVMNVVPGYCELLVDIRGTHVQARDSVFELLQEEISKVSEKRGLLIELQLISKDNPIILPENMVNQIAETAHSLGYSYEIMPSGAGHDAMHMATLCPTGMIFIPSHLGISHNPLEFTDWKDIEAGIKVLQKVILEQAEVC.

This sequence belongs to the peptidase M20 family.

This is an uncharacterized protein from Haemophilus influenzae (strain ATCC 51907 / DSM 11121 / KW20 / Rd).